A 503-amino-acid chain; its full sequence is ATP synthase subunit alpha (503 aa).

170 to 177 (GDRKTGKT) is a binding site for ATP.

This sequence belongs to the ATPase alpha/beta chains family. In terms of assembly, F-type ATPases have 2 components, CF(1) - the catalytic core - and CF(0) - the membrane proton channel. CF(1) has five subunits: alpha(3), beta(3), gamma(1), delta(1), epsilon(1). CF(0) has four main subunits: a(1), b(1), b'(1) and c(9-12).

It is found in the cellular thylakoid membrane. It catalyses the reaction ATP + H2O + 4 H(+)(in) = ADP + phosphate + 5 H(+)(out). Its function is as follows. Produces ATP from ADP in the presence of a proton gradient across the membrane. The alpha chain is a regulatory subunit. This Synechocystis sp. (strain ATCC 27184 / PCC 6803 / Kazusa) protein is ATP synthase subunit alpha.